A 101-amino-acid polypeptide reads, in one-letter code: Phosphoribosyl-ATP pyrophosphatase (101 aa).

It belongs to the PRA-PH family.

Its subcellular location is the cytoplasm. The enzyme catalyses 1-(5-phospho-beta-D-ribosyl)-ATP + H2O = 1-(5-phospho-beta-D-ribosyl)-5'-AMP + diphosphate + H(+). It participates in amino-acid biosynthesis; L-histidine biosynthesis; L-histidine from 5-phospho-alpha-D-ribose 1-diphosphate: step 2/9. In Natronomonas pharaonis (strain ATCC 35678 / DSM 2160 / CIP 103997 / JCM 8858 / NBRC 14720 / NCIMB 2260 / Gabara) (Halobacterium pharaonis), this protein is Phosphoribosyl-ATP pyrophosphatase.